Reading from the N-terminus, the 239-residue chain is Phospholipase A2 (239 aa).

An N-terminal signal peptide occupies residues 1–19 (MSLIIVLVISVLSADAVLS). Residues 20–105 (MDNELYLNLE…GRCLSVGESE (86 aa)) constitute a propeptide that is removed on maturation. Ca(2+) is bound by residues Trp-113, Gly-115, and Gly-117. Disulfide bonds link Cys-114-Cys-136, Cys-135-Cys-174, Cys-142-Cys-167, Cys-165-Cys-202, and Cys-207-Cys-217. His-139 is an active-site residue. Asp-140 is a binding site for Ca(2+). Positions 211–213 (RSP) are excised as a propeptide.

The protein belongs to the phospholipase A2 family. Group III subfamily. As to quaternary structure, heterodimer composed of a small subunit and a large subunit; disulfid-linked. Ca(2+) serves as cofactor. As to expression, expressed by the venom gland.

The protein resides in the secreted. The enzyme catalyses a 1,2-diacyl-sn-glycero-3-phosphocholine + H2O = a 1-acyl-sn-glycero-3-phosphocholine + a fatty acid + H(+). Toxic phospholipase A2, which may catalyze the calcium-dependent hydrolysis of the 2-acyl groups in 3-sn-phosphoglycerides. Inhibits both skeletal (RYR1) and cardiac (RYR2) ryanodine receptors (calcium release channels). Probably blocks ryanodine receptors by generating a lipid product. This chain is Phospholipase A2, found in Hoffmannihadrurus gertschi (Scorpion).